The primary structure comprises 246 residues: tRNA (guanine-N(1)-)-methyltransferase (246 aa).

S-adenosyl-L-methionine is bound by residues G117 and 137-142 (IGDYVL).

The protein belongs to the RNA methyltransferase TrmD family. As to quaternary structure, homodimer.

It is found in the cytoplasm. The enzyme catalyses guanosine(37) in tRNA + S-adenosyl-L-methionine = N(1)-methylguanosine(37) in tRNA + S-adenosyl-L-homocysteine + H(+). In terms of biological role, specifically methylates guanosine-37 in various tRNAs. The polypeptide is tRNA (guanine-N(1)-)-methyltransferase (Acinetobacter baumannii (strain ACICU)).